The chain runs to 659 residues: A-type ATP synthase subunit I (659 aa).

8 helical membrane passes run 376–396, 415–435, 460–480, 489–509, 518–538, 542–562, 568–588, and 590–610; these read FFFGFMLTDFVYGLLLGIISA, IMLWSSVFTMTLGILFGSYCG, MIALAIGLAHLFTGYLLGFIV, GAIFEQLSWLLIIIGITLFAL, LIVKGIFGIGLILFMIGEVLA, MAVLLVISDFFGFVGNWLSYA, ALATSGIALVINILVEMIWGI, and IASVPLGALIGILVLIGGHIF.

The protein belongs to the V-ATPase 116 kDa subunit family. In terms of assembly, has multiple subunits with at least A(3), B(3), C, D, E, F, H, I and proteolipid K(x).

The protein resides in the cell membrane. Functionally, component of the A-type ATP synthase that produces ATP from ADP in the presence of a proton gradient across the membrane. The polypeptide is A-type ATP synthase subunit I (Pyrococcus horikoshii (strain ATCC 700860 / DSM 12428 / JCM 9974 / NBRC 100139 / OT-3)).